We begin with the raw amino-acid sequence, 632 residues long: 1-deoxy-D-xylulose-5-phosphate synthase (632 aa).

Residues His78 and 119-121 (AHS) contribute to the thiamine diphosphate site. Asp150 serves as a coordination point for Mg(2+). Residues 151–152 (GA), Asn179, Tyr286, and Glu368 contribute to the thiamine diphosphate site. Asn179 contributes to the Mg(2+) binding site.

It belongs to the transketolase family. DXPS subfamily. In terms of assembly, homodimer. The cofactor is Mg(2+). Thiamine diphosphate serves as cofactor.

The enzyme catalyses D-glyceraldehyde 3-phosphate + pyruvate + H(+) = 1-deoxy-D-xylulose 5-phosphate + CO2. Its pathway is metabolic intermediate biosynthesis; 1-deoxy-D-xylulose 5-phosphate biosynthesis; 1-deoxy-D-xylulose 5-phosphate from D-glyceraldehyde 3-phosphate and pyruvate: step 1/1. In terms of biological role, catalyzes the acyloin condensation reaction between C atoms 2 and 3 of pyruvate and glyceraldehyde 3-phosphate to yield 1-deoxy-D-xylulose-5-phosphate (DXP). The polypeptide is 1-deoxy-D-xylulose-5-phosphate synthase (Albidiferax ferrireducens (strain ATCC BAA-621 / DSM 15236 / T118) (Rhodoferax ferrireducens)).